The sequence spans 413 residues: Tyrosine--tRNA ligase (413 aa).

Tyr33 provides a ligand contact to L-tyrosine. A 'HIGH' region motif is present at residues 38–47 (PTADSLHVGH). Positions 162 and 166 each coordinate L-tyrosine. The short motif at 225 to 229 (KFGKT) is the 'KMSKS' region element. Lys228 is an ATP binding site. The 68-residue stretch at 346 to 413 (TSAIDAIVNV…KKKYYLLEIK (68 aa)) folds into the S4 RNA-binding domain.

The protein belongs to the class-I aminoacyl-tRNA synthetase family. TyrS type 1 subfamily. Homodimer.

Its subcellular location is the cytoplasm. The enzyme catalyses tRNA(Tyr) + L-tyrosine + ATP = L-tyrosyl-tRNA(Tyr) + AMP + diphosphate + H(+). Catalyzes the attachment of tyrosine to tRNA(Tyr) in a two-step reaction: tyrosine is first activated by ATP to form Tyr-AMP and then transferred to the acceptor end of tRNA(Tyr). The chain is Tyrosine--tRNA ligase from Mesoplasma florum (strain ATCC 33453 / NBRC 100688 / NCTC 11704 / L1) (Acholeplasma florum).